The sequence spans 263 residues: tRNA pseudouridine synthase A (263 aa).

Asp51 functions as the Nucleophile in the catalytic mechanism. Tyr109 provides a ligand contact to substrate.

It belongs to the tRNA pseudouridine synthase TruA family. As to quaternary structure, homodimer.

The catalysed reaction is uridine(38/39/40) in tRNA = pseudouridine(38/39/40) in tRNA. In terms of biological role, formation of pseudouridine at positions 38, 39 and 40 in the anticodon stem and loop of transfer RNAs. This is tRNA pseudouridine synthase A from Pseudoalteromonas atlantica (strain T6c / ATCC BAA-1087).